Here is a 239-residue protein sequence, read N- to C-terminus: MMKGRSLSAEDRARLETAIGYQFAEKERLDRALTHSSARNARASNYQRLEFLGDRVLGLCVAELLFQTFLDANEGELSVRLNQLVSAESCARVADELSLHEYIRTGSDVKKITGKHMMNVRADVVESLIAAIYLDGGLEAARRFVLRHWTDRAASADGARRDAKTELQEWAHAKFGAAPRYRTDDRSGPDHDPRFTVTVEVDGIAPETGTDRSKRGAEQIAAMRLLEREGVWQKRSAGN.

The RNase III domain occupies 12–137; it reads RARLETAIGY…LIAAIYLDGG (126 aa). Glu50 contacts Mg(2+). Asp54 is a catalytic residue. Mg(2+) is bound by residues Asp123 and Glu126. Glu126 is a catalytic residue. Residues 162–231 form the DRBM domain; sequence DAKTELQEWA…AMRLLEREGV (70 aa).

The protein belongs to the ribonuclease III family. In terms of assembly, homodimer. Mg(2+) serves as cofactor.

The protein localises to the cytoplasm. It catalyses the reaction Endonucleolytic cleavage to 5'-phosphomonoester.. Its function is as follows. Digests double-stranded RNA. Involved in the processing of primary rRNA transcript to yield the immediate precursors to the large and small rRNAs (23S and 16S). Processes some mRNAs, and tRNAs when they are encoded in the rRNA operon. Processes pre-crRNA and tracrRNA of type II CRISPR loci if present in the organism. This is Ribonuclease 3 from Sinorhizobium fredii (strain NBRC 101917 / NGR234).